A 901-amino-acid chain; its full sequence is Core protein VP3 (901 aa).

Belongs to the orbivirus VP3 family.

The protein localises to the virion. Its function is as follows. The VP3 protein is one of the five proteins (with VP1, VP4, VP6 and VP7) which form the inner capsid of the virus. This is Core protein VP3 (Segment-3) from Bluetongue virus 10 (isolate USA) (BTV 10).